The primary structure comprises 433 residues: Small ribosomal subunit biogenesis GTPase RsgA 1, mitochondrial (433 aa).

The interval 1–20 (MLRAKHIGKNYSSSLSPVLS) is disordered. In terms of domain architecture, CP-type G spans 113–291 (SEILDPPVAN…LADTPGFNQP (179 aa)). A GTP-binding site is contributed by 212–220 (GPSGVGKSS). Residues Cys317, Cys322, His324, and Cys330 each coordinate Zn(2+).

This sequence belongs to the TRAFAC class YlqF/YawG GTPase family. RsgA subfamily. In terms of assembly, monomer. Associates with 30S ribosomal subunit, binds 16S rRNA. It depends on Zn(2+) as a cofactor.

It is found in the mitochondrion. Functionally, one of several proteins that assist in the late maturation steps of the functional core of the 30S ribosomal subunit. Helps release RbfA from mature subunits. May play a role in the assembly of ribosomal proteins into the subunit. Circularly permuted GTPase that catalyzes slow GTP hydrolysis, GTPase activity is stimulated by the 30S ribosomal subunit. Required for embryo development. In Arabidopsis thaliana (Mouse-ear cress), this protein is Small ribosomal subunit biogenesis GTPase RsgA 1, mitochondrial.